Consider the following 222-residue polypeptide: Tegument protein UL26 (222 aa).

The protein belongs to the herpesviridae US22 family. In terms of assembly, interacts with UL25. Interacts with ISGylation machinery components ISG15, UBA7 and HERC5; these interactions inhibit global protein ISGylation. ISGylated; ISGylation regulates UL26 stability and inhibits its activities to suppress NF-kappa-B signaling.

It localises to the virion tegument. Its subcellular location is the host nucleus. Plays a role in the inhibition of host NF-kappa-B. This inhibition affects both the canonical and the non-canonical pathways. Blocks the induction of host IKK phosphorylation. May also influence the normal phosphorylation state of several tegument proteins including pp28 in virions. Also suppresses virus-induced ISGylation independent of its own ISGylation. The chain is Tegument protein UL26 (UL26) from Homo sapiens (Human).